The chain runs to 343 residues: L-idonate 5-dehydrogenase (NAD(P)(+)) (343 aa).

Zn(2+) is bound by residues C40, H65, C93, C96, C99, C107, and E153.

The protein belongs to the zinc-containing alcohol dehydrogenase family. The cofactor is Zn(2+).

It catalyses the reaction L-idonate + NADP(+) = 5-dehydro-D-gluconate + NADPH + H(+). The catalysed reaction is L-idonate + NAD(+) = 5-dehydro-D-gluconate + NADH + H(+). Its pathway is carbohydrate acid metabolism; L-idonate degradation. Functionally, catalyzes the NADH/NADPH-dependent oxidation of L-idonate to 5-ketogluconate (5KG). This Escherichia coli (strain K12) protein is L-idonate 5-dehydrogenase (NAD(P)(+)) (idnD).